The sequence spans 459 residues: Cysteine--tRNA ligase (459 aa).

C29 provides a ligand contact to Zn(2+). The short motif at 31 to 41 (PTVYNLVHIGN) is the 'HIGH' region element. The Zn(2+) site is built by C209, H234, and E238. Positions 267-271 (KMSKS) match the 'KMSKS' region motif. Position 270 (K270) interacts with ATP.

The protein belongs to the class-I aminoacyl-tRNA synthetase family. As to quaternary structure, monomer. The cofactor is Zn(2+).

The protein localises to the cytoplasm. It carries out the reaction tRNA(Cys) + L-cysteine + ATP = L-cysteinyl-tRNA(Cys) + AMP + diphosphate. This is Cysteine--tRNA ligase from Saccharophagus degradans (strain 2-40 / ATCC 43961 / DSM 17024).